The chain runs to 509 residues: Maturase K (509 aa).

The protein belongs to the intron maturase 2 family. MatK subfamily.

The protein localises to the plastid. Its subcellular location is the chloroplast. In terms of biological role, usually encoded in the trnK tRNA gene intron. Probably assists in splicing its own and other chloroplast group II introns. In Otacanthus azureus (Brazilian snapdragon), this protein is Maturase K.